The chain runs to 424 residues: Elongation factor Tu, mitochondrial (424 aa).

Residues 36–234 form the tr-type G domain; sequence KPHVNVGTIG…VLDTKIPLPH (199 aa). Positions 45–52 are G1; the sequence is GHVDHGKT. Residue 45–52 coordinates GTP; that stretch reads GHVDHGKT. The segment at 86 to 90 is G2; sequence GITIT. Positions 107 to 110 are G3; it reads DCPG. GTP contacts are provided by residues 107-111 and 162-165; these read DCPGH and NKMD. Residues 162–165 are G4; that stretch reads NKMD. A G5 region spans residues 199–201; the sequence is AAA.

It belongs to the TRAFAC class translation factor GTPase superfamily. Classic translation factor GTPase family. EF-Tu/EF-1A subfamily.

It is found in the mitochondrion. This protein promotes the GTP-dependent binding of aminoacyl-tRNA to the A-site of ribosomes during protein biosynthesis. The polypeptide is Elongation factor Tu, mitochondrial (tufm) (Dictyostelium discoideum (Social amoeba)).